The following is a 232-amino-acid chain: Phosphatidylserine decarboxylase proenzyme (232 aa).

Residue Ser190 is the Schiff-base intermediate with substrate; via pyruvic acid of the active site. Ser190 carries the post-translational modification Pyruvic acid (Ser); by autocatalysis.

Belongs to the phosphatidylserine decarboxylase family. PSD-A subfamily. As to quaternary structure, heterodimer of a large membrane-associated beta subunit and a small pyruvoyl-containing alpha subunit. The cofactor is pyruvate. In terms of processing, is synthesized initially as an inactive proenzyme. Formation of the active enzyme involves a self-maturation process in which the active site pyruvoyl group is generated from an internal serine residue via an autocatalytic post-translational modification. Two non-identical subunits are generated from the proenzyme in this reaction, and the pyruvate is formed at the N-terminus of the alpha chain, which is derived from the carboxyl end of the proenzyme. The post-translation cleavage follows an unusual pathway, termed non-hydrolytic serinolysis, in which the side chain hydroxyl group of the serine supplies its oxygen atom to form the C-terminus of the beta chain, while the remainder of the serine residue undergoes an oxidative deamination to produce ammonia and the pyruvoyl prosthetic group on the alpha chain.

The protein localises to the cell membrane. The catalysed reaction is a 1,2-diacyl-sn-glycero-3-phospho-L-serine + H(+) = a 1,2-diacyl-sn-glycero-3-phosphoethanolamine + CO2. Its pathway is phospholipid metabolism; phosphatidylethanolamine biosynthesis; phosphatidylethanolamine from CDP-diacylglycerol: step 2/2. In terms of biological role, catalyzes the formation of phosphatidylethanolamine (PtdEtn) from phosphatidylserine (PtdSer). This Sinorhizobium medicae (strain WSM419) (Ensifer medicae) protein is Phosphatidylserine decarboxylase proenzyme.